The sequence spans 335 residues: Acetyl-coenzyme A carboxylase carboxyl transferase subunit alpha (335 aa).

One can recognise a CoA carboxyltransferase C-terminal domain in the interval 48-308 (TLELKVDALR…KEILIEELKA (261 aa)).

This sequence belongs to the AccA family. As to quaternary structure, acetyl-CoA carboxylase is a heterohexamer composed of biotin carboxyl carrier protein (AccB), biotin carboxylase (AccC) and two subunits each of ACCase subunit alpha (AccA) and ACCase subunit beta (AccD).

The protein resides in the cytoplasm. It catalyses the reaction N(6)-carboxybiotinyl-L-lysyl-[protein] + acetyl-CoA = N(6)-biotinyl-L-lysyl-[protein] + malonyl-CoA. The protein operates within lipid metabolism; malonyl-CoA biosynthesis; malonyl-CoA from acetyl-CoA: step 1/1. Its function is as follows. Component of the acetyl coenzyme A carboxylase (ACC) complex. First, biotin carboxylase catalyzes the carboxylation of biotin on its carrier protein (BCCP) and then the CO(2) group is transferred by the carboxyltransferase to acetyl-CoA to form malonyl-CoA. The sequence is that of Acetyl-coenzyme A carboxylase carboxyl transferase subunit alpha from Pelodictyon phaeoclathratiforme (strain DSM 5477 / BU-1).